Consider the following 196-residue polypeptide: Probable cobalt-precorrin-6B C(15)-methyltransferase (decarboxylating) (196 aa).

Residues Thr24, 48–52 (GCGTG), Asp72, and Ala101 contribute to the S-adenosyl-L-methionine site.

Belongs to the methyltransferase superfamily. Archaeal-type CbiT family.

The catalysed reaction is Co-precorrin-6B + S-adenosyl-L-methionine = Co-precorrin-7 + S-adenosyl-L-homocysteine + CO2. Its pathway is cofactor biosynthesis; adenosylcobalamin biosynthesis; cob(II)yrinate a,c-diamide from sirohydrochlorin (anaerobic route): step 8/10. In terms of biological role, catalyzes the methylation of C-15 in cobalt-precorrin-6B followed by the decarboxylation of C-12 to form cobalt-precorrin-7. The polypeptide is Probable cobalt-precorrin-6B C(15)-methyltransferase (decarboxylating) (Pyrobaculum aerophilum (strain ATCC 51768 / DSM 7523 / JCM 9630 / CIP 104966 / NBRC 100827 / IM2)).